The following is an 847-amino-acid chain: Putative membrane protein SCO5905 (847 aa).

Transmembrane regions (helical) follow at residues 18-38, 187-207, 215-235, 248-268, 302-322, 326-346, 381-401, 539-559, 562-582, 600-620, 643-663, and 672-692; these read AVVV…APAL, GGDK…LLAI, LVPL…GAIL, ASIM…IITA, IVLA…GFGP, LGVA…VLLL, VKVA…LLGY, DTTL…VLLL, LLAP…TLGA, VTAY…IFIM, TGGV…VLMT, and FGFA…PLLV. Positions 708–729 are disordered; that stretch reads RPGTPQTPSTPTSEPPSADAPA. 3 helical membrane passes run 744–764, 778–798, and 808–828; these read FTWI…GMYL, FGTL…LVAI, and TIFA…EIWA.

Belongs to the resistance-nodulation-cell division (RND) (TC 2.A.6) family. MmpL subfamily.

The protein localises to the cell membrane. The chain is Putative membrane protein SCO5905 from Streptomyces coelicolor (strain ATCC BAA-471 / A3(2) / M145).